A 165-amino-acid polypeptide reads, in one-letter code: MNAEINPLHAYFKLPNTVSLVAGSSEGETPLNAFDGALLNAGIGNVNLIRISSIMPPEAEIVPLPKLPMGALVPTAYGYIISDVPGETISAAISVAIPKDKSLCGLIMEYEGKCSKKEAEKTVREMAKIGFEMRGWELDRIESIAVEHTVEKLGCAFAAAALWYK.

Position 53 is a pyruvic acid (Ser) (S53).

The protein belongs to the PdaD family. Trimer of an alpha-beta dimer. Pyruvate serves as cofactor.

It catalyses the reaction L-arginine + H(+) = agmatine + CO2. This Methanocaldococcus jannaschii (strain ATCC 43067 / DSM 2661 / JAL-1 / JCM 10045 / NBRC 100440) (Methanococcus jannaschii) protein is Pyruvoyl-dependent arginine decarboxylase (pdaD).